The primary structure comprises 95 residues: UPF0358 protein BT9727_3692 (95 aa).

This sequence belongs to the UPF0358 family.

The sequence is that of UPF0358 protein BT9727_3692 from Bacillus thuringiensis subsp. konkukian (strain 97-27).